The chain runs to 189 residues: GMP synthase [glutamine-hydrolyzing] subunit A (189 aa).

The 189-residue stretch at 1 to 189 (MIVILNNGGQ…CKKCGFEFEE (189 aa)) folds into the Glutamine amidotransferase type-1 domain. Cys76 functions as the Nucleophile in the catalytic mechanism. Active-site residues include His163 and Glu165.

In terms of assembly, heterodimer composed of a glutamine amidotransferase subunit (A) and a GMP-binding subunit (B).

The catalysed reaction is XMP + L-glutamine + ATP + H2O = GMP + L-glutamate + AMP + diphosphate + 2 H(+). It functions in the pathway purine metabolism; GMP biosynthesis; GMP from XMP (L-Gln route): step 1/1. Its function is as follows. Catalyzes the synthesis of GMP from XMP. The chain is GMP synthase [glutamine-hydrolyzing] subunit A from Methanococcus maripaludis (strain C5 / ATCC BAA-1333).